Reading from the N-terminus, the 526-residue chain is Putative NipSnap protein K02D10.1 (526 aa).

Belongs to the NipSnap family.

This Caenorhabditis elegans protein is Putative NipSnap protein K02D10.1.